The following is a 142-amino-acid chain: Lipoprotein MlpI (142 aa).

Positions 1 to 17 (MKIINILFCLFLLMLNS) are cleaved as a signal peptide. Residue Cys18 is the site of N-palmitoyl cysteine attachment. Cys18 carries the S-diacylglycerol cysteine lipid modification. The disordered stretch occupies residues 22–54 (DTNTSQTKSRQKRDLTQKEATQEKPKSKEDLLR). Residues 33-54 (KRDLTQKEATQEKPKSKEDLLR) are compositionally biased toward basic and acidic residues.

This sequence belongs to the Multicopy lipoprotein (Mlp) family.

It localises to the cell outer membrane. Functionally, an outer membrane protein that may participate in pathogenesis. Some human Lyme disease patients have antibodies against this protein. The Mlp proteins probably undergo intragenic recombination, generating new alleles. This Borreliella burgdorferi (strain ATCC 35210 / DSM 4680 / CIP 102532 / B31) (Borrelia burgdorferi) protein is Lipoprotein MlpI.